The primary structure comprises 87 residues: Large ribosomal subunit protein bL27c (87 aa).

The tract at residues 1-20 (MAHKKGSGSTKNGRDSRSQR) is disordered.

This sequence belongs to the bacterial ribosomal protein bL27 family.

The protein resides in the plastid. The protein localises to the chloroplast. The chain is Large ribosomal subunit protein bL27c from Gracilaria tenuistipitata var. liui (Red alga).